We begin with the raw amino-acid sequence, 55 residues long: Large ribosomal subunit protein bL33 (55 aa).

It belongs to the bacterial ribosomal protein bL33 family.

The chain is Large ribosomal subunit protein bL33 from Sodalis glossinidius (strain morsitans).